A 128-amino-acid chain; its full sequence is NHP2-like protein 1 (128 aa).

The interval 36–48 (RKGANEATKTLNR) is interaction with U4 snRNA and U4atac snRNA. The segment at 96–128 (SRPVIACSVTIKEGSQLKPQIQSVQQAIERLLV) is important for U4 snRNA-binding.

It belongs to the eukaryotic ribosomal protein eL8 family. In terms of assembly, identified in the spliceosome B complex. Component of the U4/U6-U5 tri-snRNP complex. Part of the small subunit (SSU) processome, composed of more than 70 proteins and the RNA chaperone small nucleolar RNA (snoRNA) U3.

It is found in the nucleus. The protein localises to the nucleolus. Part of the small subunit (SSU) processome, first precursor of the small eukaryotic ribosomal subunit. During the assembly of the SSU processome in the nucleolus, many ribosome biogenesis factors, an RNA chaperone and ribosomal proteins associate with the nascent pre-rRNA and work in concert to generate RNA folding, modifications, rearrangements and cleavage as well as targeted degradation of pre-ribosomal RNA by the RNA exosome. Involved in pre-mRNA splicing as component of the spliceosome. Binds to the 5'-stem-loop of U4 snRNA and thereby contributes to spliceosome assembly. The protein undergoes a conformational change upon RNA-binding. Core component of box C/D small nucleolar ribonucleoprotein (snoRNP) complexes that function in methylation of multiple sites on ribosomal RNAs (rRNAs) and messenger RNAs (mRNAs). The protein is NHP2-like protein 1 of Xenopus laevis (African clawed frog).